The primary structure comprises 82 residues: Large ribosomal subunit protein uL23 (82 aa).

The protein belongs to the universal ribosomal protein uL23 family. In terms of assembly, part of the 50S ribosomal subunit. Contacts protein L29.

Its function is as follows. Binds to 23S rRNA. One of the proteins that surrounds the polypeptide exit tunnel on the outside of the ribosome. This chain is Large ribosomal subunit protein uL23, found in Methanospirillum hungatei JF-1 (strain ATCC 27890 / DSM 864 / NBRC 100397 / JF-1).